Consider the following 231-residue polypeptide: 5'-methylthioadenosine/S-adenosylhomocysteine nucleosidase (231 aa).

The active-site Proton acceptor is the Glu-12. Substrate contacts are provided by residues Gly-78, Val-153, and 174–175 (ME). Catalysis depends on Asp-198, which acts as the Proton donor.

Belongs to the PNP/UDP phosphorylase family. MtnN subfamily.

The catalysed reaction is S-adenosyl-L-homocysteine + H2O = S-(5-deoxy-D-ribos-5-yl)-L-homocysteine + adenine. It carries out the reaction S-methyl-5'-thioadenosine + H2O = 5-(methylsulfanyl)-D-ribose + adenine. The enzyme catalyses 5'-deoxyadenosine + H2O = 5-deoxy-D-ribose + adenine. It participates in amino-acid biosynthesis; L-methionine biosynthesis via salvage pathway; S-methyl-5-thio-alpha-D-ribose 1-phosphate from S-methyl-5'-thioadenosine (hydrolase route): step 1/2. In terms of biological role, catalyzes the irreversible cleavage of the glycosidic bond in both 5'-methylthioadenosine (MTA) and S-adenosylhomocysteine (SAH/AdoHcy) to adenine and the corresponding thioribose, 5'-methylthioribose and S-ribosylhomocysteine, respectively. Also cleaves 5'-deoxyadenosine, a toxic by-product of radical S-adenosylmethionine (SAM) enzymes, into 5-deoxyribose and adenine. The chain is 5'-methylthioadenosine/S-adenosylhomocysteine nucleosidase from Vibrio vulnificus (strain CMCP6).